We begin with the raw amino-acid sequence, 351 residues long: Probable NADP-dependent isopropanol dehydrogenase (351 aa).

Residues cysteine 37, histidine 59, glutamate 60, and aspartate 150 each contribute to the Zn(2+) site. NADP(+)-binding positions include alanine 175 to valine 178, aspartate 198 to arginine 200, valine 265 to tyrosine 267, and lysine 340.

It belongs to the zinc-containing alcohol dehydrogenase family. Zn(2+) is required as a cofactor.

The enzyme catalyses propan-2-ol + NADP(+) = acetone + NADPH + H(+). In terms of biological role, alcohol dehydrogenase with a preference for medium chain secondary alcohols, such as 2-butanol and isopropanol. Has very low activity with primary alcohols, such as ethanol. Under physiological conditions, the enzyme reduces aldehydes and 2-ketones to produce secondary alcohols. Is also active with acetaldehyde and propionaldehyde. In Mycoplasma pneumoniae (strain ATCC 29342 / M129 / Subtype 1) (Mycoplasmoides pneumoniae), this protein is Probable NADP-dependent isopropanol dehydrogenase (adh).